Reading from the N-terminus, the 511-residue chain is MFTLGTALSNQIDANWQTYVMIIVYFIILLIIGFYGYRQATGNLSEFMLGGRSIGPYITALSAGASDMSGWMIMGLPGSVYSTGLSAIWITIGLTLGAYINYFVVAPRLRVFTEIAGDAITLPDFFKNRLDDKKNIIKIISGLIIVVFFTLYTHSGFVSGGKLFESAFGLNYHAGLLIVAIIVIFYTFFGGYLAVSITDFFQGVIMLIAMVMVPIVALLKLNGWDTFHDIAQMKPTNLDLFRGTTVLGIVSLFSWGLGYFGQPHIIVRFMSIKSHKLLPKARRLGISWMAVGLLGAIGVGLTGISFISERHIKSEDPETLFIVMSQILFHPLVGGFLLAAILAAIMSTISSQLLVTSSSLTEDFYKLIRGSDKASSHQKEFVLIGRLSVLLVAIVAITIAWHPNDTILNLVGNAWAGFGAAFSPLVLYSLYWKDLTRAGAISGMVAGAVVVIVWISWIKPLATINAFFGMYEIIPGFIISVLITYIVSKLTKKPDDYVIENLNKVKHIVKE.

Transmembrane regions (helical) follow at residues tryptophan 16–glycine 36, isoleucine 54–methionine 74, leucine 85–valine 105, isoleucine 139–serine 159, glycine 175–valine 195, aspartate 199–leucine 219, valine 246–isoleucine 266, leucine 284–isoleucine 304, isoleucine 327–serine 347, phenylalanine 381–tryptophan 401, isoleucine 407–leucine 427, alanine 438–isoleucine 458, and phenylalanine 467–valine 487.

The protein belongs to the sodium:solute symporter (SSF) (TC 2.A.21) family.

It is found in the cell membrane. The enzyme catalyses L-proline(in) + Na(+)(in) = L-proline(out) + Na(+)(out). Its function is as follows. Catalyzes the sodium-dependent uptake of extracellular L-proline. The polypeptide is Sodium/proline symporter (putP) (Staphylococcus epidermidis (strain ATCC 12228 / FDA PCI 1200)).